Reading from the N-terminus, the 146-residue chain is UPF0178 protein BCA_3127 (146 aa).

Belongs to the UPF0178 family.

In Bacillus cereus (strain 03BB102), this protein is UPF0178 protein BCA_3127.